Consider the following 495-residue polypeptide: MNKEILAVVEAVSNEKALPREKIFEALESALATATKKKYEQEIDVRVQIDRKSGDFDTFRRWLVVDEVTQPTKEITLEAARYEDESLNLGDYVEDQIESVTFDRITTQTAKQVIVQKVREAERAMVVDQFREHEGEIITGVVKKVNRDNISLDLGNNAEAVILREDMLPRENFRPGDRVRGVLYSVRPEARGAQLFVTRSKPEMLIELFRIEVPEIGEEVIEIKAAARDPGSRAKIAVKTNDKRIDPVGACVGMRGARVQAVSTELGGERIDIVLWDDNPAQFVINAMAPADVASIVVDEDKHTMDIAVEAGNLAQAIGRNGQNVRLASQLSGWELNVMTVDDLQAKHQAEAHAAIDTFTKYLDIDEDFATVLVEEGFSTLEELAYVPMKELLEIEGLDEPTVEALRERAKNALATIAQAQEESLGDNKPADDLLNLEGVDRDLAFKLAARGVCTLEDLAEQGIDDLADIEGLTDEKAGALIMAARNICWFGDEA.

The region spanning Gly135 to Ser200 is the S1 motif domain. The region spanning Lys302–Asp368 is the KH domain. Repeat copies occupy residues Asp364 to Leu414 and Gly439 to Cys489. Residues Asp364–Cys489 form a 2 X 51 AA approximate repeats region.

It belongs to the NusA family. In terms of assembly, monomer. Binds directly to the core enzyme of the DNA-dependent RNA polymerase and to nascent RNA.

It is found in the cytoplasm. Functionally, participates in both transcription termination and antitermination. In Shigella flexneri, this protein is Transcription termination/antitermination protein NusA.